The primary structure comprises 400 residues: Tryptophan synthase beta chain (400 aa).

Lys-92 bears the N6-(pyridoxal phosphate)lysine mark.

The protein belongs to the TrpB family. In terms of assembly, tetramer of two alpha and two beta chains. The cofactor is pyridoxal 5'-phosphate.

It carries out the reaction (1S,2R)-1-C-(indol-3-yl)glycerol 3-phosphate + L-serine = D-glyceraldehyde 3-phosphate + L-tryptophan + H2O. It participates in amino-acid biosynthesis; L-tryptophan biosynthesis; L-tryptophan from chorismate: step 5/5. The beta subunit is responsible for the synthesis of L-tryptophan from indole and L-serine. In Chromobacterium violaceum (strain ATCC 12472 / DSM 30191 / JCM 1249 / CCUG 213 / NBRC 12614 / NCIMB 9131 / NCTC 9757 / MK), this protein is Tryptophan synthase beta chain.